The chain runs to 520 residues: Basal body-orientation factor 1 (520 aa).

Positions 1 to 21 (MPKKKGKGKGKGKGKGKGKKD) are enriched in basic residues. A disordered region spans residues 1–34 (MPKKKGKGKGKGKGKGKGKKDGKHDSKADRESEI). Residues 22–34 (GKHDSKADRESEI) show a composition bias toward basic and acidic residues. Coiled coils occupy residues 27–175 (KADR…REKM) and 245–386 (VKEA…RQEA). Residues 468–492 (AHPPALSASSSEKIQVSSDAGSTVE) are disordered. A compositionally biased stretch (low complexity) spans 469–478 (HPPALSASSS). Polar residues predominate over residues 479–492 (EKIQVSSDAGSTVE).

Belongs to the BBOF1 family.

It localises to the cytoplasm. It is found in the cytoskeleton. The protein resides in the cilium basal body. Basal body protein required in multiciliate cells to align and maintain cilia orientation in response to flow. May act by mediating a maturation step that stabilizes and aligns cilia orientation. Not required to respond to planar cell polarity (PCP) or flow-based orientation cues. In Danio rerio (Zebrafish), this protein is Basal body-orientation factor 1.